Consider the following 210-residue polypeptide: Imidazoleglycerol-phosphate dehydratase (210 aa).

Belongs to the imidazoleglycerol-phosphate dehydratase family.

The protein resides in the cytoplasm. The catalysed reaction is D-erythro-1-(imidazol-4-yl)glycerol 3-phosphate = 3-(imidazol-4-yl)-2-oxopropyl phosphate + H2O. It functions in the pathway amino-acid biosynthesis; L-histidine biosynthesis; L-histidine from 5-phospho-alpha-D-ribose 1-diphosphate: step 6/9. The chain is Imidazoleglycerol-phosphate dehydratase from Mycobacterium marinum (strain ATCC BAA-535 / M).